Here is a 388-residue protein sequence, read N- to C-terminus: UDP-galactose transporter senju (388 aa).

Transmembrane regions (helical) follow at residues 13 to 33, 46 to 66, 84 to 104, 113 to 133, 142 to 162, 202 to 222, 236 to 256, 276 to 296, 309 to 329, and 331 to 351; these read LTFV…IFVT, TVTV…CLYC, VLGL…LAFV, TYYL…QIIF, WISL…FGSF, FSLS…AGVY, IFVQ…VILL, FSVL…SFFL, ALEL…PIYM, and TALA…SPVV.

The protein belongs to the nucleotide-sugar transporter family.

The protein resides in the golgi apparatus membrane. UDP-galactose transporter involved in the synthesis of galactose-containing glycans. Plays a role in quiescence of the innate immune response, possibly by regulating glycosylation of the Toll pathway ligand spz. The protein is UDP-galactose transporter senju of Drosophila melanogaster (Fruit fly).